The primary structure comprises 254 residues: NAD-dependent glycerol dehydrogenase (254 aa).

NAD(+) is bound at residue 18–47; it reads VVTGAASGIGKAMAELFSEKGAYVVLLDIK. The active-site Proton acceptor is Tyr160. NAD(+) is bound at residue Lys164.

This sequence belongs to the short-chain dehydrogenases/reductases (SDR) family. Mg(2+) is required as a cofactor. The cofactor is Mn(2+).

It is found in the cytoplasm. The enzyme catalyses glycerol + NAD(+) = dihydroxyacetone + NADH + H(+). With respect to regulation, inhibited by Zn(2+). In terms of biological role, involved in the glycerol metabolism. Catalyzes the NAD-dependent oxidation of glycerol to dihydroxyacetone (glycerone). GolD specifically uses NAD. This chain is NAD-dependent glycerol dehydrogenase, found in Listeria innocua serovar 6a (strain ATCC BAA-680 / CLIP 11262).